The following is a 213-amino-acid chain: Phosphatidylcholine transfer protein (213 aa).

Met-1 is subject to N-acetylmethionine. The START domain maps to 1–212 (MDPGAGAFSE…MVKACQNYKK (212 aa)). A 1,2-diacyl-sn-glycero-3-phosphocholine-binding residues include Tyr-72 and Arg-78. Ser-139 carries the post-translational modification Phosphoserine. Position 157 (Gln-157) interacts with a 1,2-diacyl-sn-glycero-3-phosphocholine. The part of the binding site for phosphatidylcholine stretch occupies residues 171-176 (VFMYYF).

As to quaternary structure, interacts with ACOT13/THEM2.

It is found in the cytoplasm. In terms of biological role, catalyzes the transfer of phosphatidylcholine between membranes. Binds phosphatidylcholine in a tight 1:1 stoichiometric complex. The polypeptide is Phosphatidylcholine transfer protein (PCTP) (Bos taurus (Bovine)).